The sequence spans 428 residues: GTPase Obg (428 aa).

The region spanning 1–158 is the Obg domain; that stretch reads MFVDQTKIDV…RTLRLELKVL (158 aa). Positions 159-328 constitute an OBG-type G domain; that stretch reads ADVGLVGFPS…LMGKTADLVE (170 aa). Residues 165-172, 190-194, 212-215, 282-285, and 309-311 contribute to the GTP site; these read GFPSVGKS, FTTLT, DLPG, TQMD, and SSV. Mg(2+) is bound by residues Ser-172 and Thr-192. Residues 350-428 form the OCT domain; the sequence is YKKPEDDGFK…IADFTFEFVD (79 aa).

The protein belongs to the TRAFAC class OBG-HflX-like GTPase superfamily. OBG GTPase family. In terms of assembly, monomer. Mg(2+) is required as a cofactor.

The protein localises to the cytoplasm. An essential GTPase which binds GTP, GDP and possibly (p)ppGpp with moderate affinity, with high nucleotide exchange rates and a fairly low GTP hydrolysis rate. Plays a role in control of the cell cycle, stress response, ribosome biogenesis and in those bacteria that undergo differentiation, in morphogenesis control. The chain is GTPase Obg from Lactobacillus gasseri (strain ATCC 33323 / DSM 20243 / BCRC 14619 / CIP 102991 / JCM 1131 / KCTC 3163 / NCIMB 11718 / NCTC 13722 / AM63).